We begin with the raw amino-acid sequence, 450 residues long: Probable helicase D10 (450 aa).

The region spanning 95 to 240 is the Helicase ATP-binding domain; it reads PIYEECDDTC…MFKDFFGYKI (146 aa). Position 108-115 (108-115) interacts with ATP; it reads GKPGFGKT. Residues 193–196 carry the DEAH box motif; the sequence is DEVH. A Helicase C-terminal domain is found at 289–439; the sequence is NLAHLYVNMG…TITMTPEKAV (151 aa).

It carries out the reaction ATP + H2O = ADP + phosphate + H(+). This chain is Probable helicase D10 (D10), found in Escherichia phage T5 (Enterobacteria phage T5).